Consider the following 189-residue polypeptide: Probable nicotinate-nucleotide adenylyltransferase (189 aa).

This sequence belongs to the NadD family.

It carries out the reaction nicotinate beta-D-ribonucleotide + ATP + H(+) = deamido-NAD(+) + diphosphate. It participates in cofactor biosynthesis; NAD(+) biosynthesis; deamido-NAD(+) from nicotinate D-ribonucleotide: step 1/1. Its function is as follows. Catalyzes the reversible adenylation of nicotinate mononucleotide (NaMN) to nicotinic acid adenine dinucleotide (NaAD). This Bacillus licheniformis (strain ATCC 14580 / DSM 13 / JCM 2505 / CCUG 7422 / NBRC 12200 / NCIMB 9375 / NCTC 10341 / NRRL NRS-1264 / Gibson 46) protein is Probable nicotinate-nucleotide adenylyltransferase.